We begin with the raw amino-acid sequence, 458 residues long: Jacalin-related lectin 22 (458 aa).

3 consecutive Jacalin-type lectin domains span residues 5–153, 160–301, and 311–453; these read YRKL…YFVL, LYKL…YFGP, and SKKL…TIVP.

This sequence belongs to the jacalin lectin family. In terms of assembly, component of the PYK10 complex, at least composed of PYK10/BGLU23, BGLU21, BGLU22, JAL22, JAL23, PBP1/JAL30, PBP2/JAL31, JAL32, JAL33, JAL34, JAL35, GLL22 and GLL23.

In terms of biological role, inhibitor-type lectin that may regulate the correct polymerization and activation of BGLU23/PYK10 upon tissue damage. The chain is Jacalin-related lectin 22 (JAL22) from Arabidopsis thaliana (Mouse-ear cress).